A 161-amino-acid chain; its full sequence is RNA pyrophosphohydrolase (161 aa).

The Nudix hydrolase domain occupies 6 to 149; sequence GYRPNVGIIL…KREVYRRAMR (144 aa). The short motif at 38-59 is the Nudix box element; it reads GGIKKDESPEEALFRELKEEVG.

Belongs to the Nudix hydrolase family. RppH subfamily. It depends on a divalent metal cation as a cofactor.

In terms of biological role, accelerates the degradation of transcripts by removing pyrophosphate from the 5'-end of triphosphorylated RNA, leading to a more labile monophosphorylated state that can stimulate subsequent ribonuclease cleavage. The protein is RNA pyrophosphohydrolase of Hahella chejuensis (strain KCTC 2396).